Reading from the N-terminus, the 338-residue chain is tRNA-cytidine(32) 2-sulfurtransferase (338 aa).

The PP-loop motif signature appears at 86 to 91 (SGGKDS). The [4Fe-4S] cluster site is built by Cys161, Cys164, and Cys252.

It belongs to the TtcA family. As to quaternary structure, homodimer. Mg(2+) serves as cofactor. The cofactor is [4Fe-4S] cluster.

It localises to the cytoplasm. The catalysed reaction is cytidine(32) in tRNA + S-sulfanyl-L-cysteinyl-[cysteine desulfurase] + AH2 + ATP = 2-thiocytidine(32) in tRNA + L-cysteinyl-[cysteine desulfurase] + A + AMP + diphosphate + H(+). Its pathway is tRNA modification. Its function is as follows. Catalyzes the ATP-dependent 2-thiolation of cytidine in position 32 of tRNA, to form 2-thiocytidine (s(2)C32). The sulfur atoms are provided by the cysteine/cysteine desulfurase (IscS) system. This is tRNA-cytidine(32) 2-sulfurtransferase from Albidiferax ferrireducens (strain ATCC BAA-621 / DSM 15236 / T118) (Rhodoferax ferrireducens).